A 557-amino-acid chain; its full sequence is Ribonuclease J 2 (557 aa).

H76, H78, H144, and E166 together coordinate Zn(2+). Residue 366-370 coordinates substrate; that stretch reads HASSH.

It belongs to the metallo-beta-lactamase superfamily. RNA-metabolizing metallo-beta-lactamase-like family. Bacterial RNase J subfamily. In terms of assembly, homodimer, may be a subunit of the RNA degradosome. Zn(2+) serves as cofactor.

The protein resides in the cytoplasm. An RNase that has 5'-3' exonuclease and possibly endoonuclease activity. Involved in maturation of rRNA and in some organisms also mRNA maturation and/or decay. The polypeptide is Ribonuclease J 2 (Staphylococcus saprophyticus subsp. saprophyticus (strain ATCC 15305 / DSM 20229 / NCIMB 8711 / NCTC 7292 / S-41)).